The chain runs to 461 residues: Deoxyguanosinetriphosphate triphosphohydrolase-like protein (461 aa).

The segment at 22-41 is disordered; it reads ERFLPDPPREKDNRPPFRRD. The segment covering 24–41 has biased composition (basic and acidic residues); the sequence is FLPDPPREKDNRPPFRRD. The 214-residue stretch at 72–285 folds into the HD domain; it reads RLTHSLEVAQ…MELADDIAYG (214 aa).

It belongs to the dGTPase family. Type 2 subfamily.

This is Deoxyguanosinetriphosphate triphosphohydrolase-like protein from Haemophilus influenzae (strain PittEE).